Here is a 475-residue protein sequence, read N- to C-terminus: Glutamyl-tRNA(Gln) amidotransferase subunit A (475 aa).

Catalysis depends on charge relay system residues K69 and S144. S168 (acyl-ester intermediate) is an active-site residue.

The protein belongs to the amidase family. GatA subfamily. As to quaternary structure, heterotrimer of A, B and C subunits.

The enzyme catalyses L-glutamyl-tRNA(Gln) + L-glutamine + ATP + H2O = L-glutaminyl-tRNA(Gln) + L-glutamate + ADP + phosphate + H(+). Allows the formation of correctly charged Gln-tRNA(Gln) through the transamidation of misacylated Glu-tRNA(Gln) in organisms which lack glutaminyl-tRNA synthetase. The reaction takes place in the presence of glutamine and ATP through an activated gamma-phospho-Glu-tRNA(Gln). This chain is Glutamyl-tRNA(Gln) amidotransferase subunit A, found in Methanosarcina barkeri (strain Fusaro / DSM 804).